A 173-amino-acid polypeptide reads, in one-letter code: Lipoprotein signal peptidase (173 aa).

Helical transmembrane passes span 7 to 27 (FFWF…LWVV), 41 to 61 (LWPG…FSLF), 70 to 90 (WLSL…PNFN), and 95 to 115 (AGYG…FVAG). Active-site residues include D119 and D135. A helical transmembrane segment spans residues 130-150 (IFNLADVFINIGIICLLIAAW).

It belongs to the peptidase A8 family.

It localises to the cell inner membrane. The enzyme catalyses Release of signal peptides from bacterial membrane prolipoproteins. Hydrolyzes -Xaa-Yaa-Zaa-|-(S,diacylglyceryl)Cys-, in which Xaa is hydrophobic (preferably Leu), and Yaa (Ala or Ser) and Zaa (Gly or Ala) have small, neutral side chains.. Its pathway is protein modification; lipoprotein biosynthesis (signal peptide cleavage). Functionally, this protein specifically catalyzes the removal of signal peptides from prolipoproteins. The protein is Lipoprotein signal peptidase of Cyanothece sp. (strain PCC 7425 / ATCC 29141).